Reading from the N-terminus, the 1024-residue chain is Beta-galactosidase (1024 aa).

2 residues coordinate substrate: Asn103 and Asp202. Position 202 (Asp202) interacts with Na(+). 3 residues coordinate Mg(2+): Glu417, His419, and Glu462. Substrate is bound by residues Glu462 and 538–541 (EYAH). Glu462 serves as the catalytic Proton donor. Glu538 (nucleophile) is an active-site residue. Asn598 provides a ligand contact to Mg(2+). Phe602 and Asn605 together coordinate Na(+). The substrate site is built by Asn605 and Trp1000.

This sequence belongs to the glycosyl hydrolase 2 family. In terms of assembly, homotetramer. Mg(2+) serves as cofactor. Requires Na(+) as cofactor.

It carries out the reaction Hydrolysis of terminal non-reducing beta-D-galactose residues in beta-D-galactosides.. The protein is Beta-galactosidase of Escherichia coli O9:H4 (strain HS).